A 75-amino-acid chain; its full sequence is DNA-directed RNA polymerase subunit Rpo6 (75 aa).

The protein belongs to the archaeal Rpo6/eukaryotic RPB6 RNA polymerase subunit family. Part of the RNA polymerase complex.

It is found in the cytoplasm. The catalysed reaction is RNA(n) + a ribonucleoside 5'-triphosphate = RNA(n+1) + diphosphate. Functionally, DNA-dependent RNA polymerase (RNAP) catalyzes the transcription of DNA into RNA using the four ribonucleoside triphosphates as substrates. This is DNA-directed RNA polymerase subunit Rpo6 from Archaeoglobus fulgidus (strain ATCC 49558 / DSM 4304 / JCM 9628 / NBRC 100126 / VC-16).